The sequence spans 534 residues: MASFVDRVVLHVSGGSGGHGCVSVKREKFKPLGGPDGGNGGDGGNVILRVSHQTTTLLDYHHAPHRHASNGGQGMGDWRGGKQGETLILPVPDGTVVKTKDGEVLADLVGEGTEYVAAAGGQGGLGNSSLSSQKRRAPGFALLGVDGEASDIVLELKSIADIALVGFPSAGKSSLIAAMSAARPKIADYPFTTLIPNLGVVEAGEVRFTIADVPGLIEGASEGKGLGHHFLRHVERCTALVHVLDTATLESDRDPLSDLAIIEAELEKYAVDMSYAGVDGEVIPLNERPKLVALNKIDTPDGKDMAEFVRAELEGRGYRVFEVSASSHEGLRQLSFAMAELVTAARARATVVTAKITPPVLRPRAVNRKEFTIRPEERNLEPLFRVLGAKPVRWVKQTDFTNEEAIGYLAERLNKLGVEDGLFKKGAKPGDTVVIGEDGENAVVFDWEPTMMAGAELLSGPRGTDPRFTDLGDRPTRSQKREEYQERRDAKSAARAELESERKAGIWTESVSARRDREAHESREAASTDDGDAL.

The Obg domain occupies 2–159; it reads ASFVDRVVLH…SDIVLELKSI (158 aa). The tract at residues 63-82 is disordered; it reads APHRHASNGGQGMGDWRGGK. Residues 71–82 show a composition bias toward gly residues; sequence GGQGMGDWRGGK. The OBG-type G domain maps to 160–343; the sequence is ADIALVGFPS…LSFAMAELVT (184 aa). GTP contacts are provided by residues 166–173, 191–195, 212–215, 295–298, and 324–326; these read GFPSAGKS, FTTLI, DVPG, NKID, and SAS. Mg(2+) contacts are provided by serine 173 and threonine 193. In terms of domain architecture, OCT spans 363–449; that stretch reads PRAVNRKEFT…ENAVVFDWEP (87 aa). The disordered stretch occupies residues 456-534; it reads ELLSGPRGTD…AASTDDGDAL (79 aa). 2 stretches are compositionally biased toward basic and acidic residues: residues 464–504 and 512–526; these read TDPR…ERKA and SARRDREAHESREAA.

It belongs to the TRAFAC class OBG-HflX-like GTPase superfamily. OBG GTPase family. Monomer. It depends on Mg(2+) as a cofactor.

The protein resides in the cytoplasm. Its function is as follows. An essential GTPase which binds GTP, GDP and possibly (p)ppGpp with moderate affinity, with high nucleotide exchange rates and a fairly low GTP hydrolysis rate. Plays a role in control of the cell cycle, stress response, ribosome biogenesis and in those bacteria that undergo differentiation, in morphogenesis control. This chain is GTPase Obg, found in Renibacterium salmoninarum (strain ATCC 33209 / DSM 20767 / JCM 11484 / NBRC 15589 / NCIMB 2235).